The following is a 145-amino-acid chain: Actin-related protein 4A (145 aa).

A disordered region spans residues 47–66 (IDDAANTTEDAKESDKEKGK). Residues 55–64 (EDAKESDKEK) show a composition bias toward basic and acidic residues.

This sequence belongs to the actin family. ARP4 subfamily. Expressed in roots, leaves and flowers.

This Arabidopsis thaliana (Mouse-ear cress) protein is Actin-related protein 4A (ARP4A).